A 501-amino-acid chain; its full sequence is MSEEREENGISRATLNTQRLSAMIDSLNNEKDDRLFPSPTTTRTMITEEKADQSDVFKPPSRLLRSPAGDVSLPPGDNRSSMISNYSGIIQEGVEVSYVVKNRQQTQERRTSKDSNSLYSLKEPVSKNELPSLPMLPSEATLTKHLSDNQSTKSNTNADEIVIKPVTNAKPVGRFNSNTSKKVEGRGSLKLLSSPLRQEKVMRSSIGSGNLASESGSSTYNTKFHQSIQEQLEEEEEGNVSDKLSIVSSVIPELYTTTNEAPKAINPIRSETNDYNPTIPPRSKDRPRSRLFIEEGDGEGDLLTEEILPTPVQPGGHYKNSSQISTVSEQKSESYYSAATSMPPEEETYLTRPLPSTPNEDSRVTSNLKRDDTLKAIHDRANHTSTSTNKQDDDMYEDIIEETPKKTKLKKDTKKKLNKKKSVKELRSFDIDTLNQLLSVTKGTLIGSEFAQLGMKIEEKRALERLVDSLSRLTADMVLDPDRYEEGLKRLDKATKALEGF.

Disordered regions lie at residues 1–78 (MSEE…PGDN) and 102–133 (NRQQTQERRTSKDSNSLYSLKEPVSKNELPSL). The span at 11–20 (SRATLNTQRL) shows a compositional bias: polar residues. Basic and acidic residues predominate over residues 46 to 55 (ITEEKADQSD). At Ser138 the chain carries Phosphoserine. Residues 146-165 (LSDNQSTKSNTNADEIVIKP) form a disordered region. Over residues 148-158 (DNQSTKSNTNA) the composition is skewed to polar residues. Phosphoserine is present on Ser208. Disordered regions lie at residues 267 to 286 (PIRSETNDYNPTIPPRSKDR) and 338 to 366 (AATSMPPEEETYLTRPLPSTPNEDSRVTS). The segment at 275–501 (YNPTIPPRSK…DKATKALEGF (227 aa)) is necessary for the normal cellular distribution and bud neck targeting. The residue at position 403 (Thr403) is a Phosphothreonine.

As to quaternary structure, interacts with NAP1 (via the central domain consisting of amino acids 143 to 362). Copurifies with ribosomes. Post-translationally, phosphorylated by CDC28.

The protein localises to the bud neck. It is found in the cytoplasm. This Saccharomyces cerevisiae (strain ATCC 204508 / S288c) (Baker's yeast) protein is Protein NBA1 (NBA1).